A 476-amino-acid polypeptide reads, in one-letter code: Glycogen synthase (476 aa).

Lys15 contributes to the ADP-alpha-D-glucose binding site.

The protein belongs to the glycosyltransferase 1 family. Bacterial/plant glycogen synthase subfamily.

The catalysed reaction is [(1-&gt;4)-alpha-D-glucosyl](n) + ADP-alpha-D-glucose = [(1-&gt;4)-alpha-D-glucosyl](n+1) + ADP + H(+). Its pathway is glycan biosynthesis; glycogen biosynthesis. In terms of biological role, synthesizes alpha-1,4-glucan chains using ADP-glucose. This Chlamydia pneumoniae (Chlamydophila pneumoniae) protein is Glycogen synthase.